A 280-amino-acid polypeptide reads, in one-letter code: Elongation factor Ts (280 aa).

Positions 79–82 (TDFV) are involved in Mg(2+) ion dislocation from EF-Tu.

The protein belongs to the EF-Ts family.

The protein localises to the cytoplasm. Functionally, associates with the EF-Tu.GDP complex and induces the exchange of GDP to GTP. It remains bound to the aminoacyl-tRNA.EF-Tu.GTP complex up to the GTP hydrolysis stage on the ribosome. In Vibrio vulnificus (strain CMCP6), this protein is Elongation factor Ts.